Consider the following 200-residue polypeptide: Pyridoxine/pyridoxamine 5'-phosphate oxidase (200 aa).

Residues Arg49 to Lys54, Tyr64 to Thr65, Arg70, Lys71, and Gln93 contribute to the FMN site. Lys54 serves as a coordination point for substrate. 3 residues coordinate substrate: Tyr111, Arg115, and Ser119. FMN-binding positions include Gln128–Ser129 and Trp173. Position 179 to 181 (Arg179 to His181) interacts with substrate. Arg183 contributes to the FMN binding site.

The protein belongs to the pyridoxamine 5'-phosphate oxidase family. As to quaternary structure, homodimer. It depends on FMN as a cofactor.

It catalyses the reaction pyridoxamine 5'-phosphate + O2 + H2O = pyridoxal 5'-phosphate + H2O2 + NH4(+). The enzyme catalyses pyridoxine 5'-phosphate + O2 = pyridoxal 5'-phosphate + H2O2. The protein operates within cofactor metabolism; pyridoxal 5'-phosphate salvage; pyridoxal 5'-phosphate from pyridoxamine 5'-phosphate: step 1/1. Its pathway is cofactor metabolism; pyridoxal 5'-phosphate salvage; pyridoxal 5'-phosphate from pyridoxine 5'-phosphate: step 1/1. In terms of biological role, catalyzes the oxidation of either pyridoxine 5'-phosphate (PNP) or pyridoxamine 5'-phosphate (PMP) into pyridoxal 5'-phosphate (PLP). The protein is Pyridoxine/pyridoxamine 5'-phosphate oxidase of Gluconobacter oxydans (strain 621H) (Gluconobacter suboxydans).